A 554-amino-acid polypeptide reads, in one-letter code: (+)-delta-cadinene synthase isozyme XC14 (554 aa).

Low complexity predominate over residues 1–16 (MASQVSQMPSSSPLSS). Residues 1-23 (MASQVSQMPSSSPLSSNKDEMRP) are disordered. Asp307, Asp311, and Asp451 together coordinate Mg(2+). Residues 307–311 (DDTYD) carry the DDXXD motif motif.

It belongs to the terpene synthase family. The cofactor is Mg(2+).

The catalysed reaction is (2E,6E)-farnesyl diphosphate = (1S,8aR)-delta-cadinene + diphosphate. Its pathway is secondary metabolite biosynthesis; terpenoid biosynthesis. Functionally, responsible for the cyclization of trans,trans-farnesyl diphosphate (FPP) to (+)-delta cadinene. The polypeptide is (+)-delta-cadinene synthase isozyme XC14 (Gossypium arboreum (Tree cotton)).